The sequence spans 183 residues: Peptide deformylase (183 aa).

Fe cation contacts are provided by C110 and H153. E154 is a catalytic residue. H157 contacts Fe cation.

It belongs to the polypeptide deformylase family. Fe(2+) serves as cofactor.

It carries out the reaction N-terminal N-formyl-L-methionyl-[peptide] + H2O = N-terminal L-methionyl-[peptide] + formate. Removes the formyl group from the N-terminal Met of newly synthesized proteins. Requires at least a dipeptide for an efficient rate of reaction. N-terminal L-methionine is a prerequisite for activity but the enzyme has broad specificity at other positions. The protein is Peptide deformylase of Oceanobacillus iheyensis (strain DSM 14371 / CIP 107618 / JCM 11309 / KCTC 3954 / HTE831).